The primary structure comprises 772 residues: Potassium transporter 24 (772 aa).

Over 1-23 (MDVEGGGAAARRKGGWWWWREEA) the chain is Cytoplasmic. Residues 24–44 (VLAYQSLGVVYGEVAAAPLYV) traverse the membrane as a helical segment. The Extracellular segment spans residues 45 to 66 (YRSAFAGGDIEHSAGNEEIYGA). The chain crosses the membrane as a helical span at residues 67–87 (LSLVFWTLTLVPLAKYVLLVL). Topologically, residues 88–150 (RADDAGEGGT…ALERHRVLQR (63 aa)) are cytoplasmic. The chain crosses the membrane as a helical span at residues 151 to 171 (LLLLLALLGTCMVIGDGVLTP). Over 172 to 192 (AVSVFSAVSGLELSMDKDQHK) the chain is Extracellular. Residues 193–213 (YILLPITCVILVCLFALQHYG) form a helical membrane-spanning segment. At 214–216 (THR) the chain is on the cytoplasmic side. The helical transmembrane segment at 217 to 237 (VGFLFAPIVCLWLLCISIIGV) threads the bilayer. The Extracellular segment spans residues 238–265 (YNIIHWNPHVYQALSPYYMYKFLRKTQT). A helical membrane pass occupies residues 266-286 (GGWMSLGGILLCVTGSEAMYA). The Cytoplasmic portion of the chain corresponds to 287 to 298 (DLGHFTQNSIKM). The helical transmembrane segment at 299–319 (AFTLLVYPALVLAYMGQAAYI) threads the bilayer. At 320–344 (SRHHNFEDGSHIGFYVSVPEKIRWP) the chain is on the extracellular side. Residues 345–365 (VLGIAILASVVGSQAIITGTF) form a helical membrane-spanning segment. Over 366–392 (SIIKQCSSLNCFPRVKIVHTSSTVHGQ) the chain is Cytoplasmic. The chain crosses the membrane as a helical span at residues 393 to 413 (IYIPEINWILMILCLSVTIGF). At 414–423 (RDTKHLTNAQ) the chain is on the extracellular side. The helical transmembrane segment at 424–444 (GLAVITVMLVTTCLMSLVILL) threads the bilayer. Over 445 to 449 (CWNKS) the chain is Cytoplasmic. The chain crosses the membrane as a helical span at residues 450–470 (IVYALSFLLFFGAIEVIYFAA). At 471–477 (SLVKFHE) the chain is on the extracellular side. A helical membrane pass occupies residues 478-498 (GAWVPVTLSFIFMMVMCVWHY). Residues 499–772 (GTKKKYEFDV…TVEVGMICLV (274 aa)) are Cytoplasmic-facing. The interval 656–684 (EEGEFDGSDSTGSSAHKEINPNTTAPKPK) is disordered.

It belongs to the HAK/KUP transporter (TC 2.A.72.3) family.

The protein localises to the membrane. In terms of biological role, high-affinity potassium transporter. The sequence is that of Potassium transporter 24 (HAK24) from Oryza sativa subsp. japonica (Rice).